We begin with the raw amino-acid sequence, 474 residues long: ATP synthase subunit beta (474 aa).

Position 151 to 158 (151 to 158) interacts with ATP; it reads GGAGVGKT.

The protein belongs to the ATPase alpha/beta chains family. As to quaternary structure, F-type ATPases have 2 components, CF(1) - the catalytic core - and CF(0) - the membrane proton channel. CF(1) has five subunits: alpha(3), beta(3), gamma(1), delta(1), epsilon(1). CF(0) has three main subunits: a(1), b(2) and c(9-12). The alpha and beta chains form an alternating ring which encloses part of the gamma chain. CF(1) is attached to CF(0) by a central stalk formed by the gamma and epsilon chains, while a peripheral stalk is formed by the delta and b chains.

The protein localises to the cell inner membrane. It carries out the reaction ATP + H2O + 4 H(+)(in) = ADP + phosphate + 5 H(+)(out). In terms of biological role, produces ATP from ADP in the presence of a proton gradient across the membrane. The catalytic sites are hosted primarily by the beta subunits. This Ruegeria sp. (strain TM1040) (Silicibacter sp.) protein is ATP synthase subunit beta.